The primary structure comprises 314 residues: Hydroxyacyl-coenzyme A dehydrogenase, mitochondrial (314 aa).

A mitochondrion-targeting transit peptide spans 1-12 (MAFVTRQFLRSM). NAD(+)-binding positions include 34-39 (GGGLMG) and Asp57. Ser73 is a CoA binding site. Lys75 carries the post-translational modification N6-acetyllysine. Lys80 contributes to the CoA binding site. Lys80 is modified (N6-succinyllysine). N6-acetyllysine; alternate occurs at positions 81 and 87. An N6-succinyllysine; alternate mark is found at Lys81 and Lys87. Glu122 contacts NAD(+). Lys125 is subject to N6-acetyllysine. Lys127 lines the NAD(+) pocket. Lys127 carries the post-translational modification N6-(2-hydroxyisobutyryl)lysine. Lys136 is modified (N6-acetyllysine; alternate). An N6-succinyllysine; alternate modification is found at Lys136. Residues Ser149 and Asn173 each contribute to the NAD(+) site. Ser149 lines the CoA pocket. Lys179 bears the N6-acetyllysine mark. N6-acetyllysine; alternate is present on residues Lys185, Lys192, and Lys202. N6-succinyllysine; alternate occurs at positions 185, 192, and 202. Lys206 is subject to N6-succinyllysine. N6-acetyllysine; alternate occurs at positions 212 and 241. 2 positions are modified to N6-succinyllysine; alternate: Lys212 and Lys241. Lys305 is an NAD(+) binding site. An N6-acetyllysine; alternate modification is found at Lys312. At Lys312 the chain carries N6-succinyllysine; alternate.

It belongs to the 3-hydroxyacyl-CoA dehydrogenase family. Homodimer. Interacts with GLUD1; this interaction inhibits the activation of glutamate dehydrogenase 1 (GLUD1). Post-translationally, succinylation at Lys-81, adjacent to a coenzyme A binding site. Desuccinylated by SIRT5. Expressed in liver, kidney, brain, and pancreatic islets.

It localises to the mitochondrion matrix. The protein localises to the nucleus. Its subcellular location is the cytoplasm. The protein resides in the cytosol. It carries out the reaction a (3S)-3-hydroxyacyl-CoA + NAD(+) = a 3-oxoacyl-CoA + NADH + H(+). It catalyses the reaction (3S)-3-hydroxybutanoyl-CoA + NAD(+) = acetoacetyl-CoA + NADH + H(+). The catalysed reaction is (3S)-hydroxydecanoyl-CoA + NAD(+) = 3-oxodecanoyl-CoA + NADH + H(+). The enzyme catalyses (3S)-hydroxyhexadecanoyl-CoA + NAD(+) = 3-oxohexadecanoyl-CoA + NADH + H(+). Its pathway is lipid metabolism; fatty acid beta-oxidation. In terms of biological role, mitochondrial fatty acid beta-oxidation enzyme that catalyzes the third step of the beta-oxidation cycle for medium and short-chain 3-hydroxy fatty acyl-CoAs (C4 to C10). Plays a role in the control of insulin secretion by inhibiting the activation of glutamate dehydrogenase 1 (GLUD1), an enzyme that has an important role in regulating amino acid-induced insulin secretion. Plays a role in the maintenance of normal spermatogenesis through the reduction of fatty acid accumulation in the testes. Functionally, inhibits cell proliferation. The chain is Hydroxyacyl-coenzyme A dehydrogenase, mitochondrial (Hadh) from Mus musculus (Mouse).